A 214-amino-acid polypeptide reads, in one-letter code: Large ribosomal subunit protein uL3 (214 aa).

Gln151 carries the post-translational modification N5-methylglutamine.

This sequence belongs to the universal ribosomal protein uL3 family. As to quaternary structure, part of the 50S ribosomal subunit. Forms a cluster with proteins L14 and L19. Post-translationally, methylated by PrmB.

Its function is as follows. One of the primary rRNA binding proteins, it binds directly near the 3'-end of the 23S rRNA, where it nucleates assembly of the 50S subunit. This chain is Large ribosomal subunit protein uL3, found in Magnetococcus marinus (strain ATCC BAA-1437 / JCM 17883 / MC-1).